We begin with the raw amino-acid sequence, 467 residues long: Trigger factor (467 aa).

In terms of domain architecture, PPIase FKBP-type spans 174 to 261 (SDIAILTFKG…LQDLKTRELP (88 aa)). The disordered stretch occupies residues 439-467 (PKKALNEKVKSSKPKNTQKKTDKTKKDSP). The span at 457 to 467 (KKTDKTKKDSP) shows a compositional bias: basic and acidic residues.

This sequence belongs to the FKBP-type PPIase family. Tig subfamily.

The protein resides in the cytoplasm. It catalyses the reaction [protein]-peptidylproline (omega=180) = [protein]-peptidylproline (omega=0). Functionally, involved in protein export. Acts as a chaperone by maintaining the newly synthesized protein in an open conformation. Functions as a peptidyl-prolyl cis-trans isomerase. This chain is Trigger factor, found in Prochlorococcus marinus (strain SARG / CCMP1375 / SS120).